Consider the following 439-residue polypeptide: Adenylosuccinate synthetase (439 aa).

Residues 12-18 (GDEGKGK) and 40-42 (GHT) contribute to the GTP site. D13 acts as the Proton acceptor in catalysis. Positions 13 and 40 each coordinate Mg(2+). Residues 13–16 (DEGK), 38–41 (NAGH), T137, R151, Q232, T247, and R311 contribute to the IMP site. H41 (proton donor) is an active-site residue. Residue 307-313 (ATTGRPR) coordinates substrate. Residues R313, 339–341 (KLD), and 421–423 (SNG) each bind GTP.

Belongs to the adenylosuccinate synthetase family. As to quaternary structure, homodimer. Mg(2+) is required as a cofactor.

The protein localises to the cytoplasm. It catalyses the reaction IMP + L-aspartate + GTP = N(6)-(1,2-dicarboxyethyl)-AMP + GDP + phosphate + 2 H(+). The protein operates within purine metabolism; AMP biosynthesis via de novo pathway; AMP from IMP: step 1/2. Plays an important role in the de novo pathway of purine nucleotide biosynthesis. Catalyzes the first committed step in the biosynthesis of AMP from IMP. This chain is Adenylosuccinate synthetase, found in Salinibacter ruber (strain DSM 13855 / M31).